The primary structure comprises 189 residues: Inner membrane-spanning protein YciB (189 aa).

The next 5 membrane-spanning stretches (helical) occupy residues 3-23 (LLIDFFPIILFFVAFKVWGIY), 47-67 (IEPMQWVSLGVIVVFGGATLL), 76-96 (WKPTVLYWLMGGALLVGQLFF), 121-141 (WSWTAFFAAMGAINLWVAHAF), and 149-169 (FKLFGGIGLMAVFVIGQALYL).

This sequence belongs to the YciB family.

Its subcellular location is the cell inner membrane. In terms of biological role, plays a role in cell envelope biogenesis, maintenance of cell envelope integrity and membrane homeostasis. This Paracidovorax citrulli (strain AAC00-1) (Acidovorax citrulli) protein is Inner membrane-spanning protein YciB.